A 71-amino-acid polypeptide reads, in one-letter code: MFTLKKPLLVLLFLGTVSLSLCEQERAADDDEGEVIEEEVKRGFMDTAKQVAKNVAVTLIDKLRCKVTGGC.

The first 22 residues, Met1–Cys22, serve as a signal peptide directing secretion. Positions Glu23–Val40 are excised as a propeptide. Residues Cys65 and Cys71 are joined by a disulfide bond.

As to expression, expressed by the skin glands.

It is found in the secreted. Functionally, displays broad-spectrum antibacterial activity against a range of Gram-positive and Gram-negative bacteria. Has low hemolytic activity, low cytotoxicity and low antioxidant activity. This chain is Palustrin-2AJ2, found in Amolops jingdongensis (Chinese torrent frog).